Here is a 320-residue protein sequence, read N- to C-terminus: Minor outer capsid protein P9 (320 aa).

Residues 297 to 320 are disordered; the sequence is RNDDEEELAGSEFTSLLSDDGRMG.

The protein belongs to the phytoreovirus minor outer capsid protein P9 family.

It is found in the virion. The protein localises to the host cytoplasm. Minor outer capsid protein. The polypeptide is Minor outer capsid protein P9 (Rice gall dwarf virus (RGDV)).